The primary structure comprises 185 residues: Homeobox expressed in ES cells 1 (185 aa).

Residues 32 to 69 (KKDCTTSVRPHRPWTDTCGDSEKGGNPPLHAPDLPSET) are disordered. The homeobox DNA-binding region spans 108 to 167 (GRRPRTAFTQNQVEVLENVFRVNCYPGIDIREDLAQKLNLEEDRIQIWFQNRRAKMKRSR).

The protein belongs to the ANF homeobox family. Can form heterodimers with PROP1 in binding to DNA Interacts with TLE1. As to expression, high levels found in the embryonic liver, lower level expression seen in the viscera, amnion and yolk sac.

The protein localises to the nucleus. In terms of biological role, required for the normal development of the forebrain, eyes and other anterior structures such as the olfactory placodes and pituitary gland. Possible transcriptional repressor. Binds to the palindromic PIII sequence, 5'-AGCTTGAGTCTAATTGAATTAACTGTAC-3'. HESX1 and PROP1 bind as heterodimers on this palindromic site, and, in vitro, HESX1 can antagonize PROP1 activation. In Mus musculus (Mouse), this protein is Homeobox expressed in ES cells 1 (Hesx1).